A 305-amino-acid polypeptide reads, in one-letter code: Taste receptor type 2 member 136 (305 aa).

Residues Met-1 to Ala-9 are Extracellular-facing. Residues Ser-10–Val-30 form a helical membrane-spanning segment. The Cytoplasmic portion of the chain corresponds to Asn-31–Arg-46. A helical transmembrane segment spans residues Ile-47–Ser-67. Over Ser-68–Ser-69 the chain is Extracellular. A helical membrane pass occupies residues Val-70–Thr-90. Residues Asn-91–Asn-99 are Cytoplasmic-facing. A helical transmembrane segment spans residues Ile-100 to Leu-120. At Lys-121–Pro-127 the chain is on the extracellular side. A helical membrane pass occupies residues Tyr-128–Cys-148. The Cytoplasmic segment spans residues Glu-149 to Thr-176. Residues Phe-177 to Cys-197 form a helical membrane-spanning segment. Residues Ser-198–Lys-223 lie on the Extracellular side of the membrane. Residues Val-224–Ile-244 traverse the membrane as a helical segment. The Cytoplasmic segment spans residues Ser-245–Pro-305.

It belongs to the G-protein coupled receptor T2R family.

It localises to the membrane. Putative taste receptor which may play a role in the perception of bitterness. The chain is Taste receptor type 2 member 136 (Tas2r136) from Mus musculus (Mouse).